Here is a 261-residue protein sequence, read N- to C-terminus: uncharacterized protein (261 aa).

6 residues coordinate a divalent metal cation: Asp-43, His-45, Asp-75, Asn-106, His-197, and His-199.

This sequence belongs to the metallophosphoesterase superfamily. The cofactor is a divalent metal cation.

This is an uncharacterized protein from Aquifex aeolicus (strain VF5).